The primary structure comprises 193 residues: MAIKLIVGLGNPGQEYMFTRHNAGFWFVLHLAQQFNITLAPDKKFHGVTGRGQIHGHDVRLLMPLTFMNKSGQSVVPMVKFYGIDNDELLIAHDELDIPAGSIKLKTDGGHGGHNGLRDITPHIGNDFHRLRVGIGHPGHKSKVSGHVLSKAAPDEQIAIDSALSAAFDALPLLLGGDVEKARSQINGFKLPE.

A tRNA-binding site is contributed by Tyr-16. His-21 functions as the Proton acceptor in the catalytic mechanism. Phe-67, Asn-69, and Asn-115 together coordinate tRNA.

This sequence belongs to the PTH family. Monomer.

Its subcellular location is the cytoplasm. The catalysed reaction is an N-acyl-L-alpha-aminoacyl-tRNA + H2O = an N-acyl-L-amino acid + a tRNA + H(+). Its function is as follows. Hydrolyzes ribosome-free peptidyl-tRNAs (with 1 or more amino acids incorporated), which drop off the ribosome during protein synthesis, or as a result of ribosome stalling. Functionally, catalyzes the release of premature peptidyl moieties from peptidyl-tRNA molecules trapped in stalled 50S ribosomal subunits, and thus maintains levels of free tRNAs and 50S ribosomes. The chain is Peptidyl-tRNA hydrolase from Psychrobacter cryohalolentis (strain ATCC BAA-1226 / DSM 17306 / VKM B-2378 / K5).